A 466-amino-acid chain; its full sequence is Ras-GEF domain-containing family member 1C (466 aa).

Disordered regions lie at residues 1 to 35 (MPRTLTASDMVTPGSLSPPPTESTEGEQAGQPLLD) and 443 to 466 (SESPESQTEKERWKSLRSSILGKT). One can recognise an N-terminal Ras-GEF domain in the interval 34 to 164 (LDGAPSSASL…LLQTLHQKLA (131 aa)). Residues 200-446 (DPYTLAQQLT…YLASYESESP (247 aa)) enclose the Ras-GEF domain.

Guanine nucleotide exchange factor (GEF). The chain is Ras-GEF domain-containing family member 1C (Rasgef1c) from Mus musculus (Mouse).